Consider the following 231-residue polypeptide: Small ribosomal subunit protein uS3 (231 aa).

Positions 39 to 107 constitute a KH type-2 domain; the sequence is IRKFIMKTLP…GVSLNIVEIR (69 aa).

It belongs to the universal ribosomal protein uS3 family. As to quaternary structure, part of the 30S ribosomal subunit. Forms a tight complex with proteins S10 and S14.

Binds the lower part of the 30S subunit head. Binds mRNA in the 70S ribosome, positioning it for translation. In Zymomonas mobilis subsp. mobilis (strain ATCC 31821 / ZM4 / CP4), this protein is Small ribosomal subunit protein uS3.